We begin with the raw amino-acid sequence, 487 residues long: V-type proton ATPase subunit B3 (487 aa).

It belongs to the ATPase alpha/beta chains family. In terms of assembly, V-ATPase is a heteromultimeric enzyme composed of a peripheral catalytic V1 complex (components A to H) attached to an integral membrane V0 proton pore complex (components: a, c, c'', d and e).

Its subcellular location is the vacuole membrane. Its function is as follows. Non-catalytic subunit of the peripheral V1 complex of vacuolar ATPase. V-ATPase is responsible for acidifying a variety of intracellular compartments in eukaryotic cells. This chain is V-type proton ATPase subunit B3 (VHA-B3), found in Arabidopsis thaliana (Mouse-ear cress).